Reading from the N-terminus, the 542-residue chain is Glucans biosynthesis protein G (542 aa).

Residues 1-34 form the signal peptide; sequence MVSLLRCPSSKPYSSLICSLTLGAVVALSGVAYA.

This sequence belongs to the OpgD/OpgG family.

It localises to the periplasm. The protein operates within glycan metabolism; osmoregulated periplasmic glucan (OPG) biosynthesis. In terms of biological role, involved in the biosynthesis of osmoregulated periplasmic glucans (OPGs). The sequence is that of Glucans biosynthesis protein G from Shewanella baltica (strain OS223).